The sequence spans 346 residues: Protein NDL1 (346 aa).

This sequence belongs to the NDRG family. In terms of assembly, interacts with GB1. Interacts with the heterodimers formed by GB1 and GG1, or GB1 and GG2. Interacts with RGS1. As to expression, expressed in root vasculature, cotyledons, leaves, petals, mature stamens and pollen grains.

The protein localises to the cytoplasm. Functionally, interacts with the heterotrimeric G protein beta subunit GB1 and plays an significant role in GB1-dependent regulation of lateral root formation. Involved in a signaling pathway that modulates root auxin transport and auxin gradients. Acts partially by positively regulating the auxin carrier PIN2 and AUX1. Acts, together with GB1 as positive regulator of meristem initiation and branching. GB1 and NDL1 positively regulate basipetal inflorescence auxin transport and modulate MAX2 expression in shoots, which regulates organ and lateral meristem formation by the establishment and maintenance of auxin gradients. The chain is Protein NDL1 from Arabidopsis thaliana (Mouse-ear cress).